Here is a 126-residue protein sequence, read N- to C-terminus: MARVKRAVNAQKKRRSILEASKGYRGQRSRLYRKAKEQQLHSLTYAYRDRRARKGDFRKLWIARINAAARLNDITYNRFIQGLKAAGVEVDRKNLAELAVSDAEAFAGLVAIAKAALPQDVNAPAA.

The protein belongs to the bacterial ribosomal protein bL20 family.

In terms of biological role, binds directly to 23S ribosomal RNA and is necessary for the in vitro assembly process of the 50S ribosomal subunit. It is not involved in the protein synthesizing functions of that subunit. The sequence is that of Large ribosomal subunit protein bL20 from Nocardia farcinica (strain IFM 10152).